Here is a 163-residue protein sequence, read N- to C-terminus: Lipoprotein signal peptidase (163 aa).

A run of 3 helical transmembrane segments spans residues 11–31 (ILIAVFVVIFDQVTKYIIATT), 63–83 (KMTFFFIITIIILIALVYFFI), and 88–108 (YNLFMQVAISLLFAGALGNFI). Catalysis depends on residues Asp-118 and Asp-136. A helical transmembrane segment spans residues 131 to 151 (IFNIADSSLTIGVILIIIALL).

The protein belongs to the peptidase A8 family.

Its subcellular location is the cell membrane. The enzyme catalyses Release of signal peptides from bacterial membrane prolipoproteins. Hydrolyzes -Xaa-Yaa-Zaa-|-(S,diacylglyceryl)Cys-, in which Xaa is hydrophobic (preferably Leu), and Yaa (Ala or Ser) and Zaa (Gly or Ala) have small, neutral side chains.. Its pathway is protein modification; lipoprotein biosynthesis (signal peptide cleavage). This protein specifically catalyzes the removal of signal peptides from prolipoproteins. This chain is Lipoprotein signal peptidase, found in Staphylococcus aureus (strain Mu3 / ATCC 700698).